A 408-amino-acid chain; its full sequence is MDFYTPPTTAGPPTRGSPESVPTTAASTFPLRKRTRAHLRARDKSDGPAPSSRGTSDRLWSWVFLKQPLSLPEHNYQAHLGNNVFLIGGRFLSARQKPLNIAVLCVILILGGLYYGFVAPWTWNHISPAIPAVFTYIFLLCVASFLRASFSDPGILPRNIHLTDRIADGSIPNEYSVEPGIDAFDPRKNTTSLSCFKQPESSENLVYLKYCSTCKIWRPPRASHCSDCDNCVDFHDHHCIWLNNCVGRKNYRYFVAFVMTGGLCGLYIVGNSIAHVICYKRHMHMTIAESLRHRPMPLVMIFLGFLGAGYPLALVGFHLWIASRGESTHEFVSMNPVTKHVVDGHVGVTLSKCKVMGSHDGFKRFSDAVLAVVCARLCAHVSPHSNPVTKQTTPQGVQKSTFRHWKRF.

Positions 1 to 14 are enriched in low complexity; sequence MDFYTPPTTAGPPT. Positions 1 to 55 are disordered; that stretch reads MDFYTPPTTAGPPTRGSPESVPTTAASTFPLRKRTRAHLRARDKSDGPAPSSRGT. The Cytoplasmic segment spans residues 1–100; sequence MDFYTPPTTA…FLSARQKPLN (100 aa). The chain crosses the membrane as a helical span at residues 101-121; it reads IAVLCVILILGGLYYGFVAPW. Over 122-125 the chain is Lumenal; sequence TWNH. A helical transmembrane segment spans residues 126-146; the sequence is ISPAIPAVFTYIFLLCVASFL. Over 147–253 the chain is Cytoplasmic; it reads RASFSDPGIL…NCVGRKNYRY (107 aa). Residues 209–259 enclose the DHHC domain; sequence KYCSTCKIWRPPRASHCSDCDNCVDFHDHHCIWLNNCVGRKNYRYFVAFVM. C239 functions as the S-palmitoyl cysteine intermediate in the catalytic mechanism. The chain crosses the membrane as a helical span at residues 254–274; it reads FVAFVMTGGLCGLYIVGNSIA. The Lumenal segment spans residues 275–296; sequence HVICYKRHMHMTIAESLRHRPM. Residues 297–317 form a helical membrane-spanning segment; sequence PLVMIFLGFLGAGYPLALVGF. The Cytoplasmic portion of the chain corresponds to 318–408; that stretch reads HLWIASRGES…KSTFRHWKRF (91 aa).

It belongs to the DHHC palmitoyltransferase family. ERF2/ZDHHC9 subfamily. As to quaternary structure, interacts with ERF4. Autopalmitoylated.

It is found in the endoplasmic reticulum membrane. The catalysed reaction is L-cysteinyl-[protein] + hexadecanoyl-CoA = S-hexadecanoyl-L-cysteinyl-[protein] + CoA. The ERF2-ERF4 complex is a palmitoyltransferase specific for Ras proteins. The sequence is that of Palmitoyltransferase ERF2 (ERF2) from Yarrowia lipolytica (strain CLIB 122 / E 150) (Yeast).